The following is a 161-amino-acid chain: Nuclear transcription factor Y subunit B-3 (161 aa).

The tract at residues 1-23 (MADSDNDSGGHKDGGNASTREQD) is disordered. Ala-2 carries the post-translational modification N-acetylalanine. A compositionally biased stretch (basic and acidic residues) spans 8-23 (SGGHKDGGNASTREQD). The DNA-binding element occupies 26 to 32 (LPIANVS). A subunit association domain (SAD) region spans residues 53–64 (VQECVSEFISFI). The disordered stretch occupies residues 114–146 (EKTTTAGRQGDKEGGGGGGGAGSGSGGAPMYGG). Residues 128 to 146 (GGGGGGAGSGSGGAPMYGG) are compositionally biased toward gly residues.

This sequence belongs to the NFYB/HAP3 subunit family. In terms of assembly, heterotrimeric transcription factor composed of three components, NF-YA, NF-YB and NF-YC. NF-YB and NF-YC must interact and dimerize for NF-YA association and DNA binding. Component of a heat stress-inducible transcriptional complex with NF-YA and NF-YB subunits made, at least, of NFYA2, NFYB3 and DPB3-1 in cooperation with DREB2A. Binds directly with DPB3-1. As to expression, ubiquitous. Expressed in seedlings, petioles, hypocotyls, reproductive organ tissues and leaves.

It localises to the nucleus. The protein localises to the cytoplasm. It is found in the cytosol. In terms of biological role, component of the NF-Y/HAP transcription factor complex. The NF-Y complex stimulates the transcription of various genes by recognizing and binding to a CCAAT motif in promoters. Promotes the expression of heat stress-inducible genes by contributing to the formation of a heat stress-specific transcriptional complex with NF-Y subunits (e.g. DPB3-1, NF-YA2 and NF-YB3) and DREB2A at the promoter of target genes, thus promoting heat tolerance. In Arabidopsis thaliana (Mouse-ear cress), this protein is Nuclear transcription factor Y subunit B-3.